The following is a 711-amino-acid chain: T-box transcription factor TBX2 (711 aa).

A DNA-binding region (T-box) is located at residues 109-287 (LEAKELWDQF…NNPFAKGFRD (179 aa)). Residues 313–449 (PERDGAESDA…GEGKEPSLAP (137 aa)) form a disordered region. A compositionally biased stretch (pro residues) spans 326 to 340 (DPPPAREPPPSPSAA). Phosphoserine is present on residues serine 336, serine 342, and serine 360. 3 stretches are compositionally biased toward basic and acidic residues: residues 363 to 372 (EPERTGEERS), 390 to 409 (TEPERSRERRSPERCSKEPT), and 421 to 444 (SLEKERPEARRKDEGRKDVGEGKE). The interval 518–602 (GSGSSGGAGP…ATSAAAAAAA (85 aa)) is repression domain 1 (RD1). Phosphoserine occurs at positions 623, 652, 656, and 675. The segment at 640 to 687 (TGLAAEGSKGGNSREPSPLPELALRKVGGPSRGALSPSGSAKEAASEL) is disordered.

As to quaternary structure, binds DNA as a monomer. Interacts with CHD4, HDAC1 and HDAC2, perhaps as components of a NuRD-like complex. Interacts with CBX3, HMGB2 and PBX1. Interacts with PML. Post-translationally, phosphorylated. May be phosphorylated by p38 MAPK in response to UV irradiation stress. In adults, highest levels in lung. Also found in heart, kidney, and ovary.

It localises to the nucleus. Functionally, transcription factor which acts as a transcriptional repressor. May also function as a transcriptional activator. Binds to the palindromic T site 5'-TTCACACCTAGGTGTGAA-3' DNA sequence, or a half-site, which are present in the regulatory region of several genes. Required for cardiac atrioventricular canal formation. May cooperate with NKX2.5 to negatively modulate expression of NPPA/ANF in the atrioventricular canal. May play a role as a positive regulator of TGFB2 expression, perhaps acting in concert with GATA4 in the developing outflow tract myocardium. Plays a role in limb pattern formation. Acts as a transcriptional repressor of ADAM10 gene expression, perhaps in concert with histone deacetylase HDAC1 as cofactor. Involved in branching morphogenesis in both developing lungs and adult mammary glands, via negative modulation of target genes; acting redundantly with TBX3. Required, together with TBX3, to maintain cell proliferation in the embryonic lung mesenchyme; perhaps acting downstream of SHH, BMP and TGFbeta signaling. Involved in modulating early inner ear development, acting independently of, and also redundantly with TBX3, in different subregions of the developing ear. Acts as a negative regulator of PML function in cellular senescence. Acts as a negative regulator of expression of CDKN1A/p21, IL33 and CCN4; repression of CDKN1A is enhanced in response to UV-induced stress, perhaps as a result of phosphorylation by p38 MAPK. Negatively modulates expression of CDKN2A/p19ARF and CDH1/E-cadherin. Plays a role in induction of the epithelial-mesenchymal transition (EMT). Plays a role in melanocyte proliferation, perhaps via regulation of cyclin CCND1. Involved in melanogenesis, acting via negative modulation of expression of DHICA oxidase/TYRP1 and P protein/OCA2. Involved in regulating retinal pigment epithelium (RPE) cell proliferation, perhaps via negatively modulating transcription of the transcription factor CEBPD. The polypeptide is T-box transcription factor TBX2 (Tbx2) (Mus musculus (Mouse)).